Reading from the N-terminus, the 299-residue chain is Taste receptor type 2 member 4 (299 aa).

The Extracellular portion of the chain corresponds to 1 to 9 (MLQLFYFSA). Residues 10 to 30 (IIASVILNFVGIIMNLFIMVV) traverse the membrane as a helical segment. The Cytoplasmic portion of the chain corresponds to 31 to 46 (NCKTWVKSHRISSSDR). A helical membrane pass occupies residues 47-67 (ILFSLGITRFLMLGLFLVNTI). Residues 68–81 (FFVSSNTERSVYLS) lie on the Extracellular side of the membrane. Residues 82–102 (AFFVLCFMFXDSSSLWFVTLL) traverse the membrane as a helical segment. Residues 103–131 (NILYCVKITNFQHSVFLLLKQNISPKIPR) are Cytoplasmic-facing. Residues 132–152 (LLLACVLISAFTTCLYITLSQ) form a helical membrane-spanning segment. Residues 153–172 (ASPFPELVTKRNNTSFNTHE) are Extracellular-facing. N-linked (GlcNAc...) asparagine glycosylation is found at Asn-164 and Asn-165. Residues 173–193 (GILSLVVSLVLSSSLQFIINV) traverse the membrane as a helical segment. Topologically, residues 194–230 (TSASLLIHSLRRHIQKMQKNATGFWNPQTEAHVGAMK) are cytoplasmic. Residues 231-251 (LMIYFLILYIPYSVATLVQYL) traverse the membrane as a helical segment. Over 252–262 (PFYVGMDMGTK) the chain is Extracellular. Residues 263–283 (AICLIFATLYSPGHSVLIIIT) form a helical membrane-spanning segment. The Cytoplasmic portion of the chain corresponds to 284-299 (HPKLKTTAKKILCFKK).

Belongs to the G-protein coupled receptor T2R family.

It is found in the membrane. The protein localises to the cell projection. The protein resides in the cilium membrane. Functionally, gustducin-coupled receptor implicated in the perception of bitter compounds in the oral cavity and the gastrointestinal tract. Signals through PLCB2 and the calcium-regulated cation channel TRPM5. In airway epithelial cells, binding of denatonium increases the intracellular calcium ion concentration and stimulates ciliary beat frequency. This chain is Taste receptor type 2 member 4 (TAS2R4), found in Pongo pygmaeus (Bornean orangutan).